The chain runs to 367 residues: Phosphoribosylaminoimidazole-succinocarboxamide synthase (367 aa).

The protein belongs to the SAICAR synthetase family.

The enzyme catalyses 5-amino-1-(5-phospho-D-ribosyl)imidazole-4-carboxylate + L-aspartate + ATP = (2S)-2-[5-amino-1-(5-phospho-beta-D-ribosyl)imidazole-4-carboxamido]succinate + ADP + phosphate + 2 H(+). The protein operates within purine metabolism; IMP biosynthesis via de novo pathway; 5-amino-1-(5-phospho-D-ribosyl)imidazole-4-carboxamide from 5-amino-1-(5-phospho-D-ribosyl)imidazole-4-carboxylate: step 1/2. In Shewanella sp. (strain W3-18-1), this protein is Phosphoribosylaminoimidazole-succinocarboxamide synthase.